The chain runs to 396 residues: Bone morphogenetic protein 2 (396 aa).

The signal sequence occupies residues M1–G23. A propeptide spans L24–R282 (cleaved by PCSK5). The interval R84–L121 is disordered. S87 bears the Phosphoserine mark. Residues N135, N163, N164, and N200 are each glycosylated (N-linked (GlcNAc...) asparagine). The tract at residues G271–K293 is disordered. The segment covering H274–K293 has biased composition (basic residues). Intrachain disulfides connect C296–C361, C325–C393, and C329–C395. The N-linked (GlcNAc...) (high mannose) asparagine glycan is linked to N338.

It belongs to the TGF-beta family. In terms of assembly, homodimer; disulfide-linked. Interacts with SOSTDC1. Interacts with GREM2, RGMA, RGMB and RGMC. Interacts with ASPN. Interacts with MAFP5. Interacts with FBN1 (via N-terminal domain) and FBN2. Interacts with type I receptor BMPR1A. Interacts with type II receptor BMPR2. Interacts with SCUBE3. Interacts with TNFAIP6 (primarily via Link domain); this interaction is inhibited by hyaluronan. Interacts with ERFE. Interacts with BMPR1A/ALK3; the interaction may induce HAMP expression. Forms heterodimers with BMP6 in vitro; the heterodimer then binds to its receptor BMPR1A /ALK3 and may induce HAMP expression. Interacts with TGFBR3. As to expression, particularly abundant in lung, spleen and colon and in low but significant levels in heart, brain, placenta, liver, skeletal muscle, kidney, pancreas, prostate, ovary and small intestine.

It is found in the secreted. Growth factor of the TGF-beta superfamily that plays essential roles in many developmental processes, including cardiogenesis, neurogenesis, and osteogenesis. Induces cartilage and bone formation. Initiates the canonical BMP signaling cascade by associating with type I receptor BMPR1A and type II receptor BMPR2. Once all three components are bound together in a complex at the cell surface, BMPR2 phosphorylates and activates BMPR1A. In turn, BMPR1A propagates signal by phosphorylating SMAD1/5/8 that travel to the nucleus and act as activators and repressors of transcription of target genes. Also acts to promote expression of HAMP, via the interaction with its receptor BMPR1A/ALK3. Can also signal through non-canonical pathways such as ERK/MAP kinase signaling cascade that regulates osteoblast differentiation. Also stimulates the differentiation of myoblasts into osteoblasts via the EIF2AK3-EIF2A-ATF4 pathway by stimulating EIF2A phosphorylation which leads to increased expression of ATF4 which plays a central role in osteoblast differentiation. Acts as a positive regulator of odontoblast differentiation during mesenchymal tooth germ formation, expression is repressed during the bell stage by MSX1-mediated inhibition of CTNNB1 signaling. In Homo sapiens (Human), this protein is Bone morphogenetic protein 2 (BMP2).